Reading from the N-terminus, the 636-residue chain is Translation factor GUF1, mitochondrial (636 aa).

A tr-type G domain is found at 35-218; the sequence is SNYRNFSIVA…AIIRDIPGPR (184 aa). GTP-binding positions include 44–51, 111–115, and 165–168; these read AHVDHGKS, DTPGH, and NKID.

It belongs to the TRAFAC class translation factor GTPase superfamily. Classic translation factor GTPase family. LepA subfamily.

The protein localises to the mitochondrion inner membrane. The enzyme catalyses GTP + H2O = GDP + phosphate + H(+). Promotes mitochondrial protein synthesis. May act as a fidelity factor of the translation reaction, by catalyzing a one-codon backward translocation of tRNAs on improperly translocated ribosomes. Binds to mitochondrial ribosomes in a GTP-dependent manner. This Debaryomyces hansenii (strain ATCC 36239 / CBS 767 / BCRC 21394 / JCM 1990 / NBRC 0083 / IGC 2968) (Yeast) protein is Translation factor GUF1, mitochondrial.